The following is a 467-amino-acid chain: Chromosomal replication initiator protein DnaA (467 aa).

The domain I, interacts with DnaA modulators stretch occupies residues 1 to 90 (MSLSLWQQCL…KPVTQTPQAA (90 aa)). Positions 91–130 (VTSNVAAPAQVAQTQPQRAAPSTRSGWDNVPAPAEPTYRS) are domain II. A compositionally biased stretch (low complexity) spans 98-111 (PAQVAQTQPQRAAP). Positions 98-119 (PAQVAQTQPQRAAPSTRSGWDN) are disordered. The tract at residues 131–347 (NVNVKHTFDN…GALNRVIANA (217 aa)) is domain III, AAA+ region. ATP is bound by residues Gly-175, Gly-177, Lys-178, and Thr-179. The segment at 348–467 (NFTGRAITID…FSNLIRTLSS (120 aa)) is domain IV, binds dsDNA.

It belongs to the DnaA family. Oligomerizes as a right-handed, spiral filament on DNA at oriC.

The protein resides in the cytoplasm. Plays an essential role in the initiation and regulation of chromosomal replication. ATP-DnaA binds to the origin of replication (oriC) to initiate formation of the DNA replication initiation complex once per cell cycle. Binds the DnaA box (a 9 base pair repeat at the origin) and separates the double-stranded (ds)DNA. Forms a right-handed helical filament on oriC DNA; dsDNA binds to the exterior of the filament while single-stranded (ss)DNA is stabiized in the filament's interior. The ATP-DnaA-oriC complex binds and stabilizes one strand of the AT-rich DNA unwinding element (DUE), permitting loading of DNA polymerase. After initiation quickly degrades to an ADP-DnaA complex that is not apt for DNA replication. Binds acidic phospholipids. This is Chromosomal replication initiator protein DnaA from Shigella boydii serotype 4 (strain Sb227).